The following is a 119-amino-acid chain: UPF0102 protein GFO_3098 (119 aa).

It belongs to the UPF0102 family.

The protein is UPF0102 protein GFO_3098 of Christiangramia forsetii (strain DSM 17595 / CGMCC 1.15422 / KT0803) (Gramella forsetii).